A 191-amino-acid chain; its full sequence is MFCMDLYKLFLEKKALLEGHFKLSSGLHSNKYFQCALLTAEPEIAEMLCETLAQKLRADKIEANLVIGPAIGGIILAYEMARALKVKAFFAEREEGQMRLRRGFTVKPDDKVIVVEDVVTTGGSTREVMDLVQSMGGEVVAVASLVDRSGGKVDFGVPFYPLLKVNVETYLPENCPLCAEGVPVVKPGSRK.

5-phospho-alpha-D-ribose 1-diphosphate is bound at residue 116-124 (EDVVTTGGS). Orotate contacts are provided by T120 and R148.

The protein belongs to the purine/pyrimidine phosphoribosyltransferase family. PyrE subfamily. As to quaternary structure, homodimer. It depends on Mg(2+) as a cofactor.

The catalysed reaction is orotidine 5'-phosphate + diphosphate = orotate + 5-phospho-alpha-D-ribose 1-diphosphate. Its pathway is pyrimidine metabolism; UMP biosynthesis via de novo pathway; UMP from orotate: step 1/2. Its function is as follows. Catalyzes the transfer of a ribosyl phosphate group from 5-phosphoribose 1-diphosphate to orotate, leading to the formation of orotidine monophosphate (OMP). The sequence is that of Orotate phosphoribosyltransferase from Carboxydothermus hydrogenoformans (strain ATCC BAA-161 / DSM 6008 / Z-2901).